The following is a 667-amino-acid chain: Tail spike protein (667 aa).

Catalysis depends on residues glutamate 360, aspartate 393, and aspartate 396.

The protein belongs to the P22likevirus tail fiber protein family. Homotrimer. Interacts with the host O-antigen lipopolysaccharides; this interaction induces cleavage of host O-antigen. Interacts with tail hub protein gp10; this interaction anchors 6 fibers onto the tail hub hexamer.

Its subcellular location is the virion. Its function is as follows. Structural component of the short non-contractile tail. The tail comprises six spikes that mediate primary attachment to the host cell lipopolysaccharides (LPS) and display endorhamnosidase enzymatic activity, hydrolyzing the alpha-1,3-O-glycosidic linkage between rhamnose and galactose of the O-antigen polysaccharide. Digestion of the LPS brings the capsid near the cell outer membrane. The polypeptide is Tail spike protein (9) (Salmonella phage P22 (Bacteriophage P22)).